The following is a 256-amino-acid chain: 5-keto-4-deoxy-D-glucarate aldolase (256 aa).

His50 acts as the Proton acceptor in catalysis. Gln151 is a substrate binding site. Glu153 serves as a coordination point for Mg(2+). Ser178 and Asp179 together coordinate substrate. Residue Asp179 participates in Mg(2+) binding.

The protein belongs to the HpcH/HpaI aldolase family. KDGluc aldolase subfamily. Homohexamer; trimer of dimers. The cofactor is Mg(2+).

It catalyses the reaction 5-dehydro-4-deoxy-D-glucarate = 2-hydroxy-3-oxopropanoate + pyruvate. The catalysed reaction is 2-dehydro-3-deoxy-D-glucarate = 2-hydroxy-3-oxopropanoate + pyruvate. Its pathway is carbohydrate acid metabolism; galactarate degradation; D-glycerate from galactarate: step 2/3. Functionally, catalyzes the reversible retro-aldol cleavage of both 5-keto-4-deoxy-D-glucarate and 2-keto-3-deoxy-D-glucarate to pyruvate and tartronic semialdehyde. This Shigella dysenteriae serotype 1 (strain Sd197) protein is 5-keto-4-deoxy-D-glucarate aldolase.